The sequence spans 816 residues: H(+)/Cl(-) exchange transporter 5 (816 aa).

The disordered stretch occupies residues 1 to 28; the sequence is MAMWQGAMDNRGFQQGSFNSFQSSSSDE. The Cytoplasmic portion of the chain corresponds to 1–124; it reads MAMWQGAMDN…WALIHSVSDA (124 aa). A compositionally biased stretch (low complexity) spans 12 to 25; that stretch reads GFQQGSFNSFQSSS. The next 2 helical transmembrane spans lie at 125-162 and 208-231; these read FSGWLLMLLIGLLSGSLAGLIDISAHWMTDLKEGICTE and VNYFMYVLWALLFAFLAVSLVKVF. Residues 237-241 carry the Selectivity filter part_1 motif; the sequence is GSGIP. Serine 238 is a binding site for chloride. The segment at residues 240–247 is an intramembrane region (helical); the sequence is IPEIKTIL. 2 consecutive transmembrane segments (helical) span residues 256–275 and 281–300; these read LGKWTLIIKTITLVLAVSSG and EGPLVHVACCCGNILCHCFN. The Selectivity filter part_2 motif lies at 279-283; that stretch reads GKEGP. 2 consecutive intramembrane regions (helical) follow at residues 312–324 and 328–336; these read VLSAAAAAGVSVA and PIGGVLFSL. 5 helical membrane-spanning segments follow: residues 348 to 366, 389 to 414, 422 to 442, 498 to 518, and 523 to 542; these read LWRSFFAALVAAFTLRSIN, LVPFILLGIFGGLWGALFIRTNIAWC, LGKYPVIEVLVVTAITAILAF, MWQLALTLILKIVITIFTFGM, and GLFIPSMAVGAIAGRLLGVG. Positions 523–527 match the Selectivity filter part_3 motif; that stretch reads GLFIP. Chloride is bound at residue phenylalanine 525. The segment at residues 570–584 is an intramembrane region (helical); sequence GLYAMVGAAACLGGV. Positions 585–587 form an intramembrane region, note=Loop between two helices; that stretch reads TRM. Positions 588-599 form an intramembrane region, helical; the sequence is TVSLVVIMFELT. An intramembrane region (note=Loop between two helices) is located at residues 600 to 604; the sequence is GGLEY. The helical transmembrane segment at 605 to 622 threads the bilayer; the sequence is IVPLMAAAMTSKWVADAL. At 623 to 816 the chain is on the cytoplasmic side; it reads GREGIYDAHI…NQDPDSILFN (194 aa). Tyrosine 628 provides a ligand contact to chloride. CBS domains lie at 656–720 and 752–812; these read MKPR…ARKK and ILDL…DPDS. Residues threonine 666, 687–689, and 794–797 contribute to the ATP site; these read YSG and TKKD.

Belongs to the chloride channel (TC 2.A.49) family. ClC-5/CLCN5 subfamily. Interacts with NEDD4 and NEDD4L. In terms of processing, ubiquitinated by NEDD4L in the presence of albumin; which promotes endocytosis and proteasomal degradation.

It is found in the golgi apparatus membrane. It localises to the endosome membrane. Its subcellular location is the cell membrane. The enzyme catalyses 2 chloride(in) + H(+)(out) = 2 chloride(out) + H(+)(in). Proton-coupled chloride transporter. Functions as antiport system and exchanges chloride ions against protons. Important for normal acidification of the endosome lumen. May play an important role in renal tubular function. The CLC channel family contains both chloride channels and proton-coupled anion transporters that exchange chloride or another anion for protons. The absence of conserved gating glutamate residues is typical for family members that function as channels. This is H(+)/Cl(-) exchange transporter 5 (CLCN5) from Sus scrofa (Pig).